The sequence spans 326 residues: 4-hydroxy-3-methylbut-2-enyl diphosphate reductase (326 aa).

Cys22 lines the [4Fe-4S] cluster pocket. (2E)-4-hydroxy-3-methylbut-2-enyl diphosphate-binding residues include His51 and His84. Positions 51 and 84 each coordinate dimethylallyl diphosphate. Isopentenyl diphosphate is bound by residues His51 and His84. Residue Cys106 participates in [4Fe-4S] cluster binding. His134 is a binding site for (2E)-4-hydroxy-3-methylbut-2-enyl diphosphate. His134 serves as a coordination point for dimethylallyl diphosphate. His134 serves as a coordination point for isopentenyl diphosphate. Catalysis depends on Glu136, which acts as the Proton donor. Residue Thr174 coordinates (2E)-4-hydroxy-3-methylbut-2-enyl diphosphate. Residue Cys204 coordinates [4Fe-4S] cluster. Residues Ser232, Ser233, Asn234, and Ser276 each contribute to the (2E)-4-hydroxy-3-methylbut-2-enyl diphosphate site. Residues Ser232, Ser233, Asn234, and Ser276 each coordinate dimethylallyl diphosphate. Isopentenyl diphosphate is bound by residues Ser232, Ser233, Asn234, and Ser276.

This sequence belongs to the IspH family. [4Fe-4S] cluster is required as a cofactor.

It carries out the reaction isopentenyl diphosphate + 2 oxidized [2Fe-2S]-[ferredoxin] + H2O = (2E)-4-hydroxy-3-methylbut-2-enyl diphosphate + 2 reduced [2Fe-2S]-[ferredoxin] + 2 H(+). It catalyses the reaction dimethylallyl diphosphate + 2 oxidized [2Fe-2S]-[ferredoxin] + H2O = (2E)-4-hydroxy-3-methylbut-2-enyl diphosphate + 2 reduced [2Fe-2S]-[ferredoxin] + 2 H(+). It participates in isoprenoid biosynthesis; dimethylallyl diphosphate biosynthesis; dimethylallyl diphosphate from (2E)-4-hydroxy-3-methylbutenyl diphosphate: step 1/1. It functions in the pathway isoprenoid biosynthesis; isopentenyl diphosphate biosynthesis via DXP pathway; isopentenyl diphosphate from 1-deoxy-D-xylulose 5-phosphate: step 6/6. Catalyzes the conversion of 1-hydroxy-2-methyl-2-(E)-butenyl 4-diphosphate (HMBPP) into a mixture of isopentenyl diphosphate (IPP) and dimethylallyl diphosphate (DMAPP). Acts in the terminal step of the DOXP/MEP pathway for isoprenoid precursor biosynthesis. In Bordetella parapertussis (strain 12822 / ATCC BAA-587 / NCTC 13253), this protein is 4-hydroxy-3-methylbut-2-enyl diphosphate reductase.